Here is a 186-residue protein sequence, read N- to C-terminus: Dynactin subunit 3 (186 aa).

Position 2 is an N-acetylalanine (Ala2). Residues 46-66 (NIASKRERVKILYKKIEDLIK) are a coiled coil.

Belongs to the dynactin subunit 3 family. As to quaternary structure, subunit of dynactin, a multiprotein complex part of a tripartite complex with dynein and a adapter, such as BICDL1, BICD2 or HOOK3. The dynactin complex is built around ACTR1A/ACTB filament and consists of an actin-related filament composed of a shoulder domain, a pointed end and a barbed end. Its length is defined by its flexible shoulder domain. The soulder is composed of 2 DCTN1 subunits, 4 DCTN2 and 2 DCTN3. The 4 DCNT2 (via N-terminus) bind the ACTR1A filament and act as molecular rulers to determine the length. The pointed end is important for binding dynein-dynactin cargo adapters. Consists of 4 subunits: ACTR10, DCNT4, DCTN5 and DCTN6. The barbed end is composed of a CAPZA1:CAPZB heterodimers, which binds ACTR1A/ACTB filament and dynactin and stabilizes dynactin.

It localises to the cytoplasm. The protein resides in the cytoskeleton. It is found in the microtubule organizing center. The protein localises to the centrosome. Its subcellular location is the chromosome. It localises to the centromere. The protein resides in the kinetochore. It is found in the spindle. The protein localises to the cleavage furrow. Its subcellular location is the midbody. Its function is as follows. Part of the dynactin complex that activates the molecular motor dynein for ultra-processive transport along microtubules. Together with dynein may be involved in spindle assembly and cytokinesis. The protein is Dynactin subunit 3 of Mus musculus (Mouse).